The following is a 25-amino-acid chain: Snake venom metalloproteinase catroxase (25 aa).

Glutamate 9 provides a ligand contact to Ca(2+).

Belongs to the venom metalloproteinase (M12B) family. In terms of assembly, monomer. Requires Zn(2+) as cofactor. In terms of tissue distribution, expressed by the venom gland.

It localises to the secreted. Its activity is regulated as follows. Inhibited by EDTA, beta-mercaptoethanol, but not by PMSF, p-tosyl-L-phenylalanine chloromethyl ketone, p-tosyl-L-lysine chloromethyl ketone, soybean trypsin inhibitor and aprotinin. Its function is as follows. Metalloprotease that is highly active against alpha-(FGA) and beta-chains (FGB) of fibrinogen molecules. This chain is Snake venom metalloproteinase catroxase, found in Crotalus atrox (Western diamondback rattlesnake).